The sequence spans 619 residues: Chaperone protein HscA homolog (619 aa).

It belongs to the heat shock protein 70 family.

Functionally, chaperone involved in the maturation of iron-sulfur cluster-containing proteins. Has a low intrinsic ATPase activity which is markedly stimulated by HscB. The polypeptide is Chaperone protein HscA homolog (Laribacter hongkongensis (strain HLHK9)).